A 342-amino-acid polypeptide reads, in one-letter code: Cystein proteinase inhibitor protein salarin (342 aa).

The signal sequence occupies residues 1–19 (MKSLVLLLLVAVTVSSVVS). Residue Asn-153 is glycosylated (N-linked (GlcNAc) asparagine). Thr-184 is a glycosylation site (O-linked (GlcNAc) threonine).

N-glycosylated, with sialylated biantennary complex-type glycans. In terms of processing, O-glycosylated, with sialylated oligosaccharides.

Its subcellular location is the cytoplasm. The protein localises to the vacuole. Its function is as follows. Inhibits papain and ficin (cysteine proteinases) but not trypsin (a serine proteinase). The chain is Cystein proteinase inhibitor protein salarin (salarin) from Salvelinus alpinus (Arctic char).